A 159-amino-acid chain; its full sequence is Cytochrome c-type biogenesis protein CcmE (159 aa).

Over 1 to 8 (MNLRRKNR) the chain is Cytoplasmic. Residues 9–29 (LWVVCAVLAGLGLTTALVLYA) form a helical; Signal-anchor for type II membrane protein membrane-spanning segment. The Periplasmic segment spans residues 30–159 (LRANIDLFYT…PQRADKDTSS (130 aa)). Residues 129-159 (KHDENYTPPEVEKAMQENHRRPQRADKDTSS) form a disordered region. Residues His-130 and Tyr-134 each coordinate heme.

The protein belongs to the CcmE/CycJ family.

The protein resides in the cell inner membrane. Its function is as follows. Heme chaperone required for the biogenesis of c-type cytochromes. Transiently binds heme delivered by CcmC and transfers the heme to apo-cytochromes in a process facilitated by CcmF and CcmH. This chain is Cytochrome c-type biogenesis protein CcmE, found in Salmonella typhimurium (strain LT2 / SGSC1412 / ATCC 700720).